Consider the following 75-residue polypeptide: Small ribosomal subunit protein bS18 (75 aa).

It belongs to the bacterial ribosomal protein bS18 family. In terms of assembly, part of the 30S ribosomal subunit. Forms a tight heterodimer with protein bS6.

Binds as a heterodimer with protein bS6 to the central domain of the 16S rRNA, where it helps stabilize the platform of the 30S subunit. The sequence is that of Small ribosomal subunit protein bS18 from Shewanella amazonensis (strain ATCC BAA-1098 / SB2B).